A 486-amino-acid chain; its full sequence is Cardiolipin synthase A (486 aa).

A run of 2 helical transmembrane segments spans residues 3–23 (TFYT…IAGV) and 38–58 (MAWL…YLSF). PLD phosphodiesterase domains follow at residues 219–246 (MDLR…VDPR) and 399–426 (EGGL…DMRS). Active-site residues include H224, K226, D231, H404, K406, and D411.

It belongs to the phospholipase D family. Cardiolipin synthase subfamily. ClsA sub-subfamily.

It is found in the cell inner membrane. The enzyme catalyses 2 a 1,2-diacyl-sn-glycero-3-phospho-(1'-sn-glycerol) = a cardiolipin + glycerol. Functionally, catalyzes the reversible phosphatidyl group transfer from one phosphatidylglycerol molecule to another to form cardiolipin (CL) (diphosphatidylglycerol) and glycerol. This Klebsiella pneumoniae (strain 342) protein is Cardiolipin synthase A.